A 174-amino-acid chain; its full sequence is uncharacterized protein (174 aa).

This is an uncharacterized protein from Dictyostelium discoideum (Social amoeba).